The primary structure comprises 258 residues: Indole-3-glycerol phosphate synthase (258 aa).

Belongs to the TrpC family.

It catalyses the reaction 1-(2-carboxyphenylamino)-1-deoxy-D-ribulose 5-phosphate + H(+) = (1S,2R)-1-C-(indol-3-yl)glycerol 3-phosphate + CO2 + H2O. It participates in amino-acid biosynthesis; L-tryptophan biosynthesis; L-tryptophan from chorismate: step 4/5. The chain is Indole-3-glycerol phosphate synthase from Geobacillus thermodenitrificans (strain NG80-2).